The primary structure comprises 392 residues: Probable tRNA sulfurtransferase (392 aa).

Residues 59 to 166 (SCYREALKRV…DEGLFIYTTE (108 aa)) enclose the THUMP domain. ATP is bound by residues 186 to 187 (LL), 211 to 212 (YF), R269, G290, and Q299.

This sequence belongs to the ThiI family.

It localises to the cytoplasm. The enzyme catalyses [ThiI sulfur-carrier protein]-S-sulfanyl-L-cysteine + a uridine in tRNA + 2 reduced [2Fe-2S]-[ferredoxin] + ATP + H(+) = [ThiI sulfur-carrier protein]-L-cysteine + a 4-thiouridine in tRNA + 2 oxidized [2Fe-2S]-[ferredoxin] + AMP + diphosphate. It carries out the reaction [ThiS sulfur-carrier protein]-C-terminal Gly-Gly-AMP + S-sulfanyl-L-cysteinyl-[cysteine desulfurase] + AH2 = [ThiS sulfur-carrier protein]-C-terminal-Gly-aminoethanethioate + L-cysteinyl-[cysteine desulfurase] + A + AMP + 2 H(+). It participates in cofactor biosynthesis; thiamine diphosphate biosynthesis. Its function is as follows. Catalyzes the ATP-dependent transfer of a sulfur to tRNA to produce 4-thiouridine in position 8 of tRNAs, which functions as a near-UV photosensor. Also catalyzes the transfer of sulfur to the sulfur carrier protein ThiS, forming ThiS-thiocarboxylate. This is a step in the synthesis of thiazole, in the thiamine biosynthesis pathway. The sulfur is donated as persulfide by IscS. The polypeptide is Probable tRNA sulfurtransferase (Coxiella burnetii (strain RSA 493 / Nine Mile phase I)).